The primary structure comprises 236 residues: 5'-methylthioadenosine/S-adenosylhomocysteine nucleosidase (236 aa).

The active-site Proton acceptor is the E12. Substrate is bound by residues G78, M153, and 174–175; that span reads ME. The Proton donor role is filled by D198.

This sequence belongs to the PNP/UDP phosphorylase family. MtnN subfamily.

The enzyme catalyses S-adenosyl-L-homocysteine + H2O = S-(5-deoxy-D-ribos-5-yl)-L-homocysteine + adenine. The catalysed reaction is S-methyl-5'-thioadenosine + H2O = 5-(methylsulfanyl)-D-ribose + adenine. It carries out the reaction 5'-deoxyadenosine + H2O = 5-deoxy-D-ribose + adenine. It participates in amino-acid biosynthesis; L-methionine biosynthesis via salvage pathway; S-methyl-5-thio-alpha-D-ribose 1-phosphate from S-methyl-5'-thioadenosine (hydrolase route): step 1/2. Its function is as follows. Catalyzes the irreversible cleavage of the glycosidic bond in both 5'-methylthioadenosine (MTA) and S-adenosylhomocysteine (SAH/AdoHcy) to adenine and the corresponding thioribose, 5'-methylthioribose and S-ribosylhomocysteine, respectively. Also cleaves 5'-deoxyadenosine, a toxic by-product of radical S-adenosylmethionine (SAM) enzymes, into 5-deoxyribose and adenine. The chain is 5'-methylthioadenosine/S-adenosylhomocysteine nucleosidase from Geobacillus thermodenitrificans (strain NG80-2).